We begin with the raw amino-acid sequence, 185 residues long: UPF0397 protein CPF_1836 (185 aa).

Helical transmembrane passes span 11 to 31 (IVAI…GSLP), 44 to 64 (AFLA…IGFI), 71 to 91 (IVFF…VGLI), 111 to 131 (IFMF…LVAP), and 149 to 169 (GVIG…ILIA).

It belongs to the UPF0397 family.

It localises to the cell membrane. In Clostridium perfringens (strain ATCC 13124 / DSM 756 / JCM 1290 / NCIMB 6125 / NCTC 8237 / Type A), this protein is UPF0397 protein CPF_1836.